We begin with the raw amino-acid sequence, 708 residues long: Leukotoxin translocation ATP-binding protein LktB (708 aa).

The Peptidase C39 domain occupies 1–126 (MEANHQRNDL…ACYQGQLILV (126 aa)). One can recognise an ABC transmembrane type-1 domain in the interval 155 to 437 (FLETLIVSIF…LAQLWQDFQQ (283 aa)). 5 helical membrane passes run 159–179 (LIVS…FQVV), 192–212 (LNII…LSGL), 270–290 (ALTS…MWYY), 296–316 (LVIL…SPIL), and 389–409 (VMVI…LSIG). The region spanning 469–704 (ISFKNIRFRY…SNGLYSYLHQ (236 aa)) is the ABC transporter domain. 503-510 (GRSGSGKS) contacts ATP.

The protein belongs to the ABC transporter superfamily. Protein-1 exporter (TC 3.A.1.109) family. In terms of assembly, homodimer.

The protein resides in the cell inner membrane. The catalysed reaction is ATP + H2O + proteinSide 1 = ADP + phosphate + proteinSide 2.. Its function is as follows. Part of the ABC transporter complex LktBD involved in leukotoxin export. Transmembrane domains (TMD) form a pore in the inner membrane and the ATP-binding domain (NBD) is responsible for energy generation. The protein is Leukotoxin translocation ATP-binding protein LktB (lktB) of Mannheimia haemolytica (Pasteurella haemolytica).